The sequence spans 376 residues: E3 ubiquitin-protein ligase RNF34 (376 aa).

The FYVE-type zinc-finger motif lies at 56–107; it reads EGPNIVCKACGLSFSVFRKKHVCCDCKKDFCSLCSVSQENLRRCSTCHLLQE. The SAP 1 domain maps to 115–134; the sequence is LMRLKVKDLRQYLLLRNIPT. Ser-169 carries the post-translational modification Phosphoserine. Residues 216-256 form a disordered region; it reads IASANTDDDDDDDDDDDDDEDDDDEQEEEEQNPGLSKKKAR. Over residues 221-246 the composition is skewed to acidic residues; that stretch reads TDDDDDDDDDDDDDEDDDDEQEEEEQ. Phosphoserine occurs at positions 258 and 260. One can recognise an SAP 2 domain in the interval 268 to 282; sequence VEGMSVRQLKEILAR. The RING-type zinc-finger motif lies at 329-364; the sequence is CRICMDAVIDCVLLECGHMVTCTKCGKRMSECPICR.

In terms of assembly, interacts with CASP8 and CASP10. Interacts with p53/TP53; involved in p53/TP53 ubiquitination. Interacts (via RING-type zinc finger) with MDM2; the interaction stabilizes MDM2. Interacts (via RING-type zinc finger) with PPARGC1A. Interacts with NOD1. In terms of processing, autoubiquitinated (in vitro). Post-translationally, proteolytically cleaved by caspases upon induction of apoptosis by TNF.

Its subcellular location is the cell membrane. The protein localises to the endomembrane system. The protein resides in the nucleus. It is found in the nucleus speckle. It localises to the cytoplasm. Its subcellular location is the cytosol. It carries out the reaction S-ubiquitinyl-[E2 ubiquitin-conjugating enzyme]-L-cysteine + [acceptor protein]-L-lysine = [E2 ubiquitin-conjugating enzyme]-L-cysteine + N(6)-ubiquitinyl-[acceptor protein]-L-lysine.. The protein operates within protein modification; protein ubiquitination. Functionally, E3 ubiquitin-protein ligase that regulates several biological processes through the ubiquitin-mediated proteasomal degradation of various target proteins. Ubiquitinates the caspases CASP8 and CASP10, promoting their proteasomal degradation, to negatively regulate cell death downstream of death domain receptors in the extrinsic pathway of apoptosis. May mediate 'Lys-48'-linked polyubiquitination of RIPK1 and its subsequent proteasomal degradation thereby indirectly regulating the tumor necrosis factor-mediated signaling pathway. Negatively regulates p53/TP53 through its direct ubiquitination and targeting to proteasomal degradation. Indirectly, may also negatively regulate p53/TP53 through ubiquitination and degradation of SFN. Mediates PPARGC1A proteasomal degradation probably through ubiquitination thereby indirectly regulating the metabolism of brown fat cells. Possibly involved in innate immunity, through 'Lys-48'-linked polyubiquitination of NOD1 and its subsequent proteasomal degradation. The sequence is that of E3 ubiquitin-protein ligase RNF34 from Mus musculus (Mouse).